The chain runs to 191 residues: Programmed cell death protein 6 (191 aa).

Ala2 carries the post-translational modification N-acetylalanine. EF-hand domains are found at residues 23–58 (PDQS…GTWT), 59–89 (PFNP…TGVW), 90–125 (KYIT…FGYR), 126–161 (LSDQ…LQRL), and 162–191 (TDIF…FSIV). 5 residues coordinate Ca(2+): Asp36, Asp38, Ser40, Val42, and Glu47. Ca(2+) contacts are provided by Asp103, Asp105, Ser107, Met109, and Glu114. Asp169, Asp171, Asp173, and Trp175 together coordinate Mg(2+).

As to quaternary structure, homodimer and heterodimer; heterodimerizes (via the EF-hand 5) with PEF1. Isoform 1 and isoform 2 self-associate; probably forming homodimers. Interacts with CPNE4 (via VWFA domain). Interacts with PDCD6IP; the interaction is calcium-dependent. Interacts with RBM22. Interacts with PLSCR4. Interacts with ANXA7 and TSG101. Interacts with DAPK1. Interacts with SEC31A; the interaction is calcium-dependent and promotes monoubiquitination of SEC31A. Interacts with ANXA11 (via N-terminus); the interaction is calcium-dependent. Interacts with PLSCR3 (via N-terminus); the interaction is calcium-dependent. Interacts with MCOLN1; the interaction is calcium-dependent. Interacts with KDR; the interaction is calcium-dependent. Interacts with HEBP2; the interaction is calcium-dependent. Interacts with TFG. Isoform 1: Interacts with SHISA5, leading to stabilize it. Isoform 2: Does not interact with SHISA5. Isoform 2: Does not interact with PDCD6IP, TSG101, ANXA7 and ANXA11.

The protein localises to the endoplasmic reticulum membrane. It is found in the cytoplasmic vesicle. The protein resides in the COPII-coated vesicle membrane. Its subcellular location is the cytoplasm. It localises to the nucleus. The protein localises to the endosome. Its function is as follows. Calcium sensor that plays a key role in processes such as endoplasmic reticulum (ER)-Golgi vesicular transport, endosomal biogenesis or membrane repair. Acts as an adapter that bridges unrelated proteins or stabilizes weak protein-protein complexes in response to calcium: calcium-binding triggers exposure of apolar surface, promoting interaction with different sets of proteins thanks to 3 different hydrophobic pockets, leading to translocation to membranes. Involved in ER-Golgi transport by promoting the association between PDCD6IP and TSG101, thereby bridging together the ESCRT-III and ESCRT-I complexes. Together with PEF1, acts as a calcium-dependent adapter for the BCR(KLHL12) complex, a complex involved in ER-Golgi transport by regulating the size of COPII coats. In response to cytosolic calcium increase, the heterodimer formed with PEF1 interacts with, and bridges together the BCR(KLHL12) complex and SEC31 (SEC31A or SEC31B), promoting monoubiquitination of SEC31 and subsequent collagen export, which is required for neural crest specification. Involved in the regulation of the distribution and function of MCOLN1 in the endosomal pathway. Promotes localization and polymerization of TFG at endoplasmic reticulum exit site. Required for T-cell receptor-, Fas-, and glucocorticoid-induced apoptosis. May mediate Ca(2+)-regulated signals along the death pathway: interaction with DAPK1 can accelerate apoptotic cell death by increasing caspase-3 activity. Its role in apoptosis may however be indirect, as suggested by knockout experiments. May inhibit KDR/VEGFR2-dependent angiogenesis; the function involves inhibition of VEGF-induced phosphorylation of the Akt signaling pathway. In terms of biological role, has a lower Ca(2+) affinity than isoform 1. The chain is Programmed cell death protein 6 (Pdcd6) from Mus musculus (Mouse).